A 286-amino-acid polypeptide reads, in one-letter code: Bifunctional protein FolD (286 aa).

NADP(+) contacts are provided by residues 165–167 (GRS) and S190.

Belongs to the tetrahydrofolate dehydrogenase/cyclohydrolase family. In terms of assembly, homodimer.

The catalysed reaction is (6R)-5,10-methylene-5,6,7,8-tetrahydrofolate + NADP(+) = (6R)-5,10-methenyltetrahydrofolate + NADPH. It catalyses the reaction (6R)-5,10-methenyltetrahydrofolate + H2O = (6R)-10-formyltetrahydrofolate + H(+). The protein operates within one-carbon metabolism; tetrahydrofolate interconversion. Catalyzes the oxidation of 5,10-methylenetetrahydrofolate to 5,10-methenyltetrahydrofolate and then the hydrolysis of 5,10-methenyltetrahydrofolate to 10-formyltetrahydrofolate. This Staphylococcus aureus (strain MRSA252) protein is Bifunctional protein FolD.